A 714-amino-acid chain; its full sequence is Fatty acid oxidation complex subunit alpha (714 aa).

Residues 1-190 form an enoyl-CoA hydratase region; it reads MEMASVFTLN…KLGLVDDVVP (190 aa). The 3-hydroxyacyl-CoA dehydrogenase stretch occupies residues 306-714; it reads APLNSVGILG…FWKTTATDLQ (409 aa).

The protein in the N-terminal section; belongs to the enoyl-CoA hydratase/isomerase family. This sequence in the central section; belongs to the 3-hydroxyacyl-CoA dehydrogenase family. In terms of assembly, heterotetramer of two alpha chains (FadJ) and two beta chains (FadI).

It is found in the cytoplasm. The enzyme catalyses a (3S)-3-hydroxyacyl-CoA = a (2E)-enoyl-CoA + H2O. It catalyses the reaction a 4-saturated-(3S)-3-hydroxyacyl-CoA = a (3E)-enoyl-CoA + H2O. The catalysed reaction is a (3S)-3-hydroxyacyl-CoA + NAD(+) = a 3-oxoacyl-CoA + NADH + H(+). It carries out the reaction (3S)-3-hydroxybutanoyl-CoA = (3R)-3-hydroxybutanoyl-CoA. It participates in lipid metabolism; fatty acid beta-oxidation. In terms of biological role, catalyzes the formation of a hydroxyacyl-CoA by addition of water on enoyl-CoA. Also exhibits 3-hydroxyacyl-CoA epimerase and 3-hydroxyacyl-CoA dehydrogenase activities. The polypeptide is Fatty acid oxidation complex subunit alpha (Escherichia coli O139:H28 (strain E24377A / ETEC)).